The sequence spans 129 residues: Small ribosomal subunit protein uS9 (129 aa).

It belongs to the universal ribosomal protein uS9 family.

In Gemmatimonas aurantiaca (strain DSM 14586 / JCM 11422 / NBRC 100505 / T-27), this protein is Small ribosomal subunit protein uS9.